The sequence spans 446 residues: C4-dicarboxylate transport protein (446 aa).

9 helical membrane passes run 25–45 (VQVL…PAIG), 58–78 (LVKM…IASI), 93–113 (FAYF…VANV), 159–179 (ALTE…GLAL), 199–219 (VFFG…FGAM), 236–256 (LLIA…LGAV), 322–342 (IYMT…LSLG), 370–390 (AATL…ILGI), and 400–420 (LTNF…EKGL).

This sequence belongs to the dicarboxylate/amino acid:cation symporter (DAACS) (TC 2.A.23) family.

The protein localises to the cell inner membrane. Functionally, responsible for the transport of dicarboxylates such as succinate, fumarate, and malate from the periplasm across the membrane. This chain is C4-dicarboxylate transport protein, found in Sphingopyxis alaskensis (strain DSM 13593 / LMG 18877 / RB2256) (Sphingomonas alaskensis).